We begin with the raw amino-acid sequence, 327 residues long: GTPase Obg (327 aa).

An Obg domain is found at 2 to 160 (HLFKDSLNLI…LNLRLELSLI (159 aa)). One can recognise an OBG-type G domain in the interval 161-326 (ADVGLVGLPN…LVSEFFSLAK (166 aa)). GTP is bound by residues 167–174 (GLPNAGKS), 192–196 (FTTKI), 213–216 (DLPG), 280–283 (SKLD), and 307–309 (SIY). Mg(2+) is bound by residues Ser-174 and Thr-194.

It belongs to the TRAFAC class OBG-HflX-like GTPase superfamily. OBG GTPase family. As to quaternary structure, monomer. The cofactor is Mg(2+).

The protein localises to the cytoplasm. Its function is as follows. An essential GTPase which binds GTP, GDP and possibly (p)ppGpp with moderate affinity, with high nucleotide exchange rates and a fairly low GTP hydrolysis rate. Plays a role in control of the cell cycle, stress response, ribosome biogenesis and in those bacteria that undergo differentiation, in morphogenesis control. This Borrelia recurrentis (strain A1) protein is GTPase Obg.